The sequence spans 777 residues: Androgen receptor (777 aa).

The tract at residues 1-416 is modulating; the sequence is MEVHIGLGGV…IDYYFPPQKP (416 aa). Disordered stretches follow at residues 53 to 95, 110 to 132, and 205 to 241; these read CVHP…QAPQ, GEQG…YPES, and RRAG…LSEP. 2 consecutive NR C4-type zinc fingers follow at residues 417–434 and 453–472; these read CLSC…ALTC and CASR…CPSC. A DNA-binding region (nuclear receptor) is located at residues 417 to 489; the sequence is CLSCEDEASG…AGMTLGARKL (73 aa). The NR LBD domain occupies 526 to 757; it reads SCQPIFLNVL…DFPEMMSEII (232 aa). 17beta-hydroxy-5alpha-androstan-3-one is bound by residues N563, R610, and T735.

It belongs to the nuclear hormone receptor family. NR3 subfamily. In terms of assembly, binds DNA as a homodimer. Interacts via the ligand-binding domain with LXXLL and FXXLF motifs from coactivator proteins. Interacts (via ligand-binding domain) with TRIM68. In terms of tissue distribution, detected in somatic Leydig and Sertoli cells in testis with high level expression. Also detected at lower expression levels in forebrain and heart.

Its subcellular location is the nucleus. The protein localises to the cytoplasm. In terms of biological role, steroid hormone receptors are ligand-activated transcription factors that regulate eukaryotic gene expression and affect cellular proliferation and differentiation in target tissues. Transcription factor activity is modulated by bound coactivator and corepressor proteins. This chain is Androgen receptor (ar), found in Aquarana catesbeiana (American bullfrog).